The primary structure comprises 398 residues: Riboflavin biosynthesis protein RibBA (398 aa).

The segment at 1–199 (MFHPIEEALE…IKDLIEYRYN (199 aa)) is DHBP synthase. Residues 26–27 (RE), Asp-31, 138–142 (RAGHT), and Glu-162 contribute to the D-ribulose 5-phosphate site. A Mg(2+)-binding site is contributed by Glu-27. Residue His-141 participates in Mg(2+) binding. Residues 200–398 (ITTLVNREVD…MKKLGHLLHF (199 aa)) are GTP cyclohydrolase II. 251–255 (RVHSE) provides a ligand contact to GTP. Residues Cys-256, Cys-267, and Cys-269 each coordinate Zn(2+). GTP contacts are provided by residues Gln-272, 294–296 (EGR), and Thr-316. Asp-328 serves as the catalytic Proton acceptor; for GTP cyclohydrolase activity. The Nucleophile; for GTP cyclohydrolase activity role is filled by Arg-330. GTP-binding residues include Thr-351 and Lys-356.

This sequence in the N-terminal section; belongs to the DHBP synthase family. It in the C-terminal section; belongs to the GTP cyclohydrolase II family. Requires Mg(2+) as cofactor. Mn(2+) serves as cofactor. The cofactor is Zn(2+).

It catalyses the reaction D-ribulose 5-phosphate = (2S)-2-hydroxy-3-oxobutyl phosphate + formate + H(+). It carries out the reaction GTP + 4 H2O = 2,5-diamino-6-hydroxy-4-(5-phosphoribosylamino)-pyrimidine + formate + 2 phosphate + 3 H(+). It functions in the pathway cofactor biosynthesis; riboflavin biosynthesis; 2-hydroxy-3-oxobutyl phosphate from D-ribulose 5-phosphate: step 1/1. The protein operates within cofactor biosynthesis; riboflavin biosynthesis; 5-amino-6-(D-ribitylamino)uracil from GTP: step 1/4. In terms of biological role, catalyzes the conversion of D-ribulose 5-phosphate to formate and 3,4-dihydroxy-2-butanone 4-phosphate. Catalyzes the conversion of GTP to 2,5-diamino-6-ribosylamino-4(3H)-pyrimidinone 5'-phosphate (DARP), formate and pyrophosphate. This is Riboflavin biosynthesis protein RibBA from Bacillus velezensis (strain DSM 23117 / BGSC 10A6 / LMG 26770 / FZB42) (Bacillus amyloliquefaciens subsp. plantarum).